Here is a 914-residue protein sequence, read N- to C-terminus: Sensor protein TorS (914 aa).

Over Met-1–Arg-8 the chain is Cytoplasmic. The helical transmembrane segment at Leu-9–Tyr-29 threads the bilayer. Residues Asn-30–Ser-332 lie on the Periplasmic side of the membrane. The chain crosses the membrane as a helical span at residues Leu-333–Tyr-353. Residues Arg-354–Arg-407 form the HAMP domain. Residues Arg-354 to Ile-914 lie on the Cytoplasmic side of the membrane. One can recognise a Histidine kinase domain in the interval Ala-450–Val-664. Residue His-453 is modified to Phosphohistidine; by autocatalysis. One can recognise a Response regulatory domain in the interval Arg-683–Leu-798. A 4-aspartylphosphate modification is found at Asp-733. An HPt domain is found at Gly-821–Ile-914. His-860 is subject to Phosphohistidine.

As to quaternary structure, may form homomultimers. Seems to interact with TorT and TorC apocytochrome. Activation requires a sequential transfer of a phosphate group from a His in the primary transmitter domain, to an Asp in the receiver domain and to a His in the secondary transmitter domain.

Its subcellular location is the cell inner membrane. It carries out the reaction ATP + protein L-histidine = ADP + protein N-phospho-L-histidine.. Its activity is regulated as follows. Inhibited by TorC apocytochrome. In terms of biological role, member of the two-component regulatory system TorS/TorR involved in the anaerobic utilization of trimethylamine-N-oxide (TMAO). Detects the presence of TMAO in the medium and, in response, activates TorR via a four-step phosphorelay. When TMAO is removed, TorS can dephosphorylate TorR, probably by a reverse phosphorelay involving His-860 and Asp-733. The polypeptide is Sensor protein TorS (torS) (Escherichia coli (strain K12)).